The primary structure comprises 359 residues: 3-dehydroquinate synthase (359 aa).

NAD(+) contacts are provided by residues 71 to 76 (DGEAYK), 105 to 109 (GVIGD), 129 to 130 (TT), K142, and K151. Zn(2+) contacts are provided by E184, H247, and H264.

This sequence belongs to the sugar phosphate cyclases superfamily. Dehydroquinate synthase family. Co(2+) is required as a cofactor. The cofactor is Zn(2+). It depends on NAD(+) as a cofactor.

The protein resides in the cytoplasm. It carries out the reaction 7-phospho-2-dehydro-3-deoxy-D-arabino-heptonate = 3-dehydroquinate + phosphate. Its pathway is metabolic intermediate biosynthesis; chorismate biosynthesis; chorismate from D-erythrose 4-phosphate and phosphoenolpyruvate: step 2/7. Catalyzes the conversion of 3-deoxy-D-arabino-heptulosonate 7-phosphate (DAHP) to dehydroquinate (DHQ). This is 3-dehydroquinate synthase from Burkholderia ambifaria (strain ATCC BAA-244 / DSM 16087 / CCUG 44356 / LMG 19182 / AMMD) (Burkholderia cepacia (strain AMMD)).